A 330-amino-acid chain; its full sequence is Putative [LysW]-L-2-aminoadipate/[LysW]-L-glutamate phosphate reductase (330 aa).

10 to 13 provides a ligand contact to NADP(+); it reads SGYI. The active site involves cysteine 142. Asparagine 297 lines the NADP(+) pocket.

This sequence belongs to the NAGSA dehydrogenase family. Type 1 subfamily. LysY sub-subfamily.

The protein resides in the cytoplasm. The enzyme catalyses [amino-group carrier protein]-C-terminal-N-(1-carboxy-5-oxopentan-1-yl)-L-glutamine + phosphate + NADP(+) = [amino-group carrier protein]-C-terminal-N-(1-carboxy-5-phosphooxy-5-oxopentan-1-yl)-L-glutamine + NADPH + H(+). It carries out the reaction [amino-group carrier protein]-C-terminal-gamma-(L-glutamyl-5-semialdehyde)-L-glutamate + phosphate + NADP(+) = [amino-group carrier protein]-C-terminal-gamma-(5-phospho-L-glutamyl)-L-glutamate + NADPH + H(+). It functions in the pathway amino-acid biosynthesis; L-lysine biosynthesis via AAA pathway; L-lysine from L-alpha-aminoadipate (Thermus route): step 3/5. The protein operates within amino-acid biosynthesis; L-arginine biosynthesis. Its function is as follows. Involved in both the arginine and lysine biosynthetic pathways. In Pyrococcus furiosus (strain ATCC 43587 / DSM 3638 / JCM 8422 / Vc1), this protein is Putative [LysW]-L-2-aminoadipate/[LysW]-L-glutamate phosphate reductase.